Consider the following 334-residue polypeptide: Desumoylating isopeptidase 1 homolog (334 aa).

The 145-residue stretch at 30-174 (TVVRLNVYDM…FLEKCIPQEW (145 aa)) folds into the PPPDE domain. Active-site residues include H55 and C133. Positions 310-325 (SNIGKTNSTPGTTSNG) are enriched in polar residues. The segment at 310–334 (SNIGKTNSTPGTTSNGLAKPTCSEC) is disordered.

It belongs to the DeSI family. Expressed in the pharynx, hypodermis, intestine, head neuron and tail neuron.

Its subcellular location is the cytoplasm. It is found in the nucleus. Its function is as follows. Protease which deconjugates SUMO from some substrate proteins. Has isopeptidase but not SUMO-processing activity. Collaborates with ubql-1 in the export of ubiquitinated proteins from the nucleus to the cytoplasm. This chain is Desumoylating isopeptidase 1 homolog, found in Caenorhabditis elegans.